The chain runs to 219 residues: Ribonuclease HII (219 aa).

The RNase H type-2 domain maps to 22–219; that stretch reads GLVAGVDEVG…LLAMRMEAVV (198 aa). The a divalent metal cation site is built by Asp-28, Glu-29, and Asp-125.

This sequence belongs to the RNase HII family. Mn(2+) is required as a cofactor. The cofactor is Mg(2+).

It is found in the cytoplasm. The enzyme catalyses Endonucleolytic cleavage to 5'-phosphomonoester.. Its function is as follows. Endonuclease that specifically degrades the RNA of RNA-DNA hybrids. This is Ribonuclease HII from Granulibacter bethesdensis (strain ATCC BAA-1260 / CGDNIH1).